The primary structure comprises 998 residues: UPF0182 protein AAur_2732 (998 aa).

Helical transmembrane passes span 18-38 (GALTPTLIVVAVAVVGFIFFA), 64-84 (IITFLIGFAMMFAAVFFAIRI), 115-135 (VVMIGLPILFGLFAGSAAASQ), 168-188 (FLGFITGFLISIAVVAGIAGI), 211-231 (QIHIAVTGALFLILLGVNFWL), 260-280 (AILAVAAGLVAILFIIAAIIG), and 287-307 (IGTAMLVITAILAGGVYPWVI). Disordered regions lie at residues 490–518 (GAPDGAPNREQDRPAGREGGGETQYTFSG), 888–923 (LFGGDSGATAGDSDNNGQTPTSPPGTTPPPAGPTDA), and 971–998 (QARLDATPAPTATPGATPSATPSPSPSS). Residues 496-509 (PNREQDRPAGREGG) show a composition bias toward basic and acidic residues. Positions 908-919 (TSPPGTTPPPAG) are enriched in pro residues. The segment covering 976–990 (ATPAPTATPGATPSA) has biased composition (low complexity).

It belongs to the UPF0182 family.

It localises to the cell membrane. This is UPF0182 protein AAur_2732 from Paenarthrobacter aurescens (strain TC1).